Reading from the N-terminus, the 463-residue chain is Soluble pyridine nucleotide transhydrogenase (463 aa).

FAD is bound at residue 35 to 44 (EDKPTVGGNC).

It belongs to the class-I pyridine nucleotide-disulfide oxidoreductase family. It depends on FAD as a cofactor.

It is found in the cytoplasm. The catalysed reaction is NAD(+) + NADPH = NADH + NADP(+). Conversion of NADPH, generated by peripheral catabolic pathways, to NADH, which can enter the respiratory chain for energy generation. The protein is Soluble pyridine nucleotide transhydrogenase of Marinobacter nauticus (strain ATCC 700491 / DSM 11845 / VT8) (Marinobacter aquaeolei).